A 1193-amino-acid chain; its full sequence is Probable cation-transporting ATPase 13A4 (1193 aa).

The Cytoplasmic portion of the chain corresponds to 1–32 (MGDHLEKSQHALLNEGDENEMEIFGYRTQGCR). Residues 33–53 (KALCLIGSIFSLGMLPLVFYW) lie within the membrane without spanning it. The Cytoplasmic portion of the chain corresponds to 54–198 (RPAWRVWANC…DVEITPIWKL (145 aa)). A helical transmembrane segment spans residues 199 to 219 (LIKEVLNPFYIFQLFSVCLWF). Residues 220 to 224 (SEDYK) lie on the Lumenal side of the membrane. A helical transmembrane segment spans residues 225-245 (EYALAIILMSVISIALTVYDL). Over 246–401 (RQQSVKLHHL…NFKLYRDAIR (156 aa)) the chain is Cytoplasmic. A helical transmembrane segment spans residues 402–422 (FLLCLVGTATIGMVYTLCVYV). Residues 423–437 (LSGEPPEEVVRKALD) are Lumenal-facing. The helical transmembrane segment at 438 to 458 (VITIAVPPALPAALTTGIIYA) threads the bilayer. Residues 459 to 901 (QRRLKKKGIF…KEGRAALVTS (443 aa)) are Cytoplasmic-facing. Asp-487 (4-aspartylphosphate intermediate) is an active-site residue. Residues Asp-849 and Asp-853 each coordinate Mg(2+). A helical transmembrane segment spans residues 902–922 (FCMFKYMALYSMIQYVGVLLL). The Lumenal portion of the chain corresponds to 923-933 (YWKTNSLSNYQ). The chain crosses the membrane as a helical span at residues 934 to 954 (FLFQDLAITTLIGVTMNLNGA). The Cytoplasmic segment spans residues 955-973 (NPKLVPFRPAGRLISPPLL). A helical transmembrane segment spans residues 974–994 (LSVVLNILLSLAMHIVGFILV). Residues 995-1036 (QKQPWYIMDYHSVCPVRNESASALAASPSVPEKTRSNSTFAS) are Lumenal-facing. A helical transmembrane segment spans residues 1037–1057 (FENTTIWFLGTINCIFVALVF). Over 1058–1071 (SKGKPFRQPTYTNY) the chain is Cytoplasmic. The helical transmembrane segment at 1072–1092 (IFVLVLILQMGVCLFILFADI) threads the bilayer. Over 1093 to 1105 (PEMHRRLDLLCTP) the chain is Lumenal. Residues 1106-1126 (VLWRVYILIMISSNFVVSLAV) form a helical membrane-spanning segment. The Cytoplasmic segment spans residues 1127–1193 (EKAIIENRAL…PVFESNEEQL (67 aa)).

Belongs to the cation transport ATPase (P-type) (TC 3.A.3) family. Type V subfamily. As to expression, expressed in brain and stomach.

The protein resides in the early endosome membrane. It is found in the late endosome membrane. Its subcellular location is the recycling endosome membrane. The catalysed reaction is ATP + H2O = ADP + phosphate + H(+). This Mus musculus (Mouse) protein is Probable cation-transporting ATPase 13A4 (Atp13a4).